Consider the following 267-residue polypeptide: Protein I267L (267 aa).

The protein belongs to the asfivirus I267L family. As to quaternary structure, interacts with host RNF135.

Plays a role in the inhibition of host RNA Pol-III-RIGI-mediated innate antiviral response. Mechanistically, interacts with host E3 ubiquitin ligase RNF135, disrupting RNF135-RIGI interaction and impairing RNF135-mediated 'Lys-63'-polyubiquitination and activation of RIGI. This is Protein I267L from African swine fever virus (strain Badajoz 1971 Vero-adapted) (Ba71V).